We begin with the raw amino-acid sequence, 43 residues long: Protein PsbN (43 aa).

Residues 5-27 (TLVTIFISGSLVSFTGYALYTAF) traverse the membrane as a helical segment.

Belongs to the PsbN family.

It is found in the plastid. Its subcellular location is the chloroplast thylakoid membrane. May play a role in photosystem I and II biogenesis. The chain is Protein PsbN from Piper cenocladum (Ant piper).